We begin with the raw amino-acid sequence, 393 residues long: Ribonuclease D (393 aa).

In terms of domain architecture, 3'-5' exonuclease spans 14 to 181 (LITTTEDLTG…VYQLLLERLE (168 aa)). One can recognise an HRDC domain in the interval 219–300 (NRRMLGVLRA…AAARALPDGA (82 aa)).

The protein belongs to the RNase D family. Requires a divalent metal cation as cofactor.

Its subcellular location is the cytoplasm. The enzyme catalyses Exonucleolytic cleavage that removes extra residues from the 3'-terminus of tRNA to produce 5'-mononucleotides.. Exonuclease involved in the 3' processing of various precursor tRNAs. Initiates hydrolysis at the 3'-terminus of an RNA molecule and releases 5'-mononucleotides. The protein is Ribonuclease D of Gluconacetobacter diazotrophicus (strain ATCC 49037 / DSM 5601 / CCUG 37298 / CIP 103539 / LMG 7603 / PAl5).